Reading from the N-terminus, the 93-residue chain is Islet amyloid polypeptide (93 aa).

Positions 1-23 (MRCISRLPAVLLILSVALGHLRA) are cleaved as a signal peptide. A propeptide spanning residues 24-35 (TPVGSGTNPQVD) is cleaved from the precursor. A disulfide bridge links cysteine 39 with cysteine 44. Residue tyrosine 74 is modified to Tyrosine amide. Residues 78–93 (NVAEDPNRESLDFLLL) constitute a propeptide that is removed on maturation.

It belongs to the calcitonin family. In terms of assembly, can form homodimers. Interacts with IDE and INS. Interaction with INS inhibits homodimerization and fibril formation. Abundant in the islets of Langerhans but is not present in the brain or seven other tissues examined.

Its subcellular location is the secreted. In terms of biological role, amylin/IAPP is a glucoregulatory peptide hormone that plays an important role in the regulation of energy homeostasis. Selectively inhibits insulin-stimulated glucose utilization and glycogen deposition in muscle, while not affecting adipocyte glucose metabolism. IAPP function is mediated by the CALCR-RAMPs (AMYRs) receptor complexes. Amylin can also bind CALCR receptor in the absence of RAMPs, although it is more selective for AMYRs. The polypeptide is Islet amyloid polypeptide (Rattus norvegicus (Rat)).